The sequence spans 103 residues: uncharacterized protein (103 aa).

The next 2 helical transmembrane spans lie at 42 to 62 (PFPL…VLLA) and 65 to 85 (TGTL…FICA).

It localises to the membrane. This is an uncharacterized protein from Saccharomyces cerevisiae (strain ATCC 204508 / S288c) (Baker's yeast).